We begin with the raw amino-acid sequence, 217 residues long: Growth hormone variant (217 aa).

The signal sequence occupies residues 1–26 (MAAGSWTCLILAIALLCLPWLQEGSA). Cystine bridges form between C79/C191 and C208/C215. Phosphoserine occurs at positions 132 and 176.

Belongs to the somatotropin/prolactin family. Expressed in the placenta.

The protein localises to the secreted. Plays an important role in growth control. Its major role in stimulating body growth is to stimulate the liver and other tissues to secrete IGF1. It stimulates both the differentiation and proliferation of myoblasts. It also stimulates amino acid uptake and protein synthesis in muscle and other tissues. This Macaca mulatta (Rhesus macaque) protein is Growth hormone variant (GH2).